Here is a 1157-residue protein sequence, read N- to C-terminus: Cyclin-dependent kinase 12 (1157 aa).

The tract at residues 15–540 (SDVSSEDFSD…RSPTSRDLKH (526 aa)) is disordered. The span at 18 to 32 (SSEDFSDQEAGDLDA) shows a compositional bias: acidic residues. Residues 55–76 (GRLDAKPDKEGYDNYRSRRAED) are compositionally biased toward basic and acidic residues. Polar residues predominate over residues 85–94 (SRQTSSSEAT). Phosphothreonine is present on T106. Residues 134–162 (RQKRKKQKKEKHKHKSKKKSKKRKKKRAK) show a composition bias toward basic residues. Low complexity predominate over residues 163–176 (SYSSIDSMSDNDIN). At T184 the chain carries Phosphothreonine. A compositionally biased stretch (polar residues) spans 189 to 215 (PSKSNERTVSAAPSSFTPHNLKESSSP). A phosphoserine mark is found at S190 and S192. T217 is modified (phosphothreonine). Over residues 224 to 255 (PNTNSNYYGESSLETANSALGSNLQVTVTNKQ) the composition is skewed to polar residues. Over residues 256–281 (SISNRLRSPPPSSRSSGNGPRFGNSP) the composition is skewed to low complexity. S280 carries the phosphoserine modification. Phosphothreonine is present on T283. Phosphoserine occurs at positions 291, 301, and 314. Over residues 315–332 (PHKEDVSAHHRSSHDHGY) the composition is skewed to basic and acidic residues. Position 353 is a phosphoserine (S353). T365 is subject to Phosphothreonine. Residues 392 to 403 (GKYERYSRDRYS) are compositionally biased toward basic and acidic residues. Over residues 408–422 (RSPSVQHSRSRQSPS) the composition is skewed to low complexity. Over residues 444 to 468 (TTVSSTPSHTTRTSKRASGTGTSGD) the composition is skewed to polar residues. The span at 473–484 (SPRTSSRYMESS) shows a compositional bias: low complexity. Phosphoserine occurs at positions 487 and 492. Over residues 495–508 (HHYHHRRSPRMRQR) the composition is skewed to basic residues. Residues 518–533 (PSSASSESSASRSRSP) are compositionally biased toward low complexity. S553 bears the Phosphoserine mark. Disordered stretches follow at residues 574–661 (ERQE…ADVP) and 675–782 (PFSA…QRPV). Residues 586 to 603 (GALTINDNSSSVDGNTPN) show a composition bias toward polar residues. Positions 609 to 623 (SAPGSGTPAAASTTS) are enriched in low complexity. Polar residues-rich tracts occupy residues 644 to 656 (NKQN…NPAS) and 721 to 731 (VTSSGSANKSV). 4 positions are modified to phosphoserine: S730, S743, S747, and S755. Residues 746–760 (LSGDDDVIDSPEDFD) are compositionally biased toward acidic residues. The 295-residue stretch at 804–1098 (FEMIAQIGEG…AEDALRSPWL (295 aa)) folds into the Protein kinase domain. ATP-binding positions include 810 to 818 (IGEGTYGQV), K833, and 891 to 896 (EYMDHD). D936 serves as the catalytic Proton acceptor. An ATP-binding site is contributed by H1118.

The protein belongs to the protein kinase superfamily. CMGC Ser/Thr protein kinase family. CDC2/CDKX subfamily. As to quaternary structure, interacts with cyclin CycK.

It localises to the nucleus. The protein localises to the chromosome. It catalyses the reaction [DNA-directed RNA polymerase] + ATP = phospho-[DNA-directed RNA polymerase] + ADP + H(+). The catalysed reaction is L-seryl-[protein] + ATP = O-phospho-L-seryl-[protein] + ADP + H(+). The enzyme catalyses L-threonyl-[protein] + ATP = O-phospho-L-threonyl-[protein] + ADP + H(+). Its function is as follows. Cyclin-dependent kinase which displays CTD kinase activity: hyperphosphorylates the C-terminal heptapeptide repeat domain (CTD) of the largest RNA polymerase II subunit, thereby acting as a key regulator of transcription elongation. The protein is Cyclin-dependent kinase 12 (Cdk12) of Drosophila melanogaster (Fruit fly).